The primary structure comprises 210 residues: Leucyl/phenylalanyl-tRNA--protein transferase (210 aa).

This sequence belongs to the L/F-transferase family.

It localises to the cytoplasm. It catalyses the reaction N-terminal L-lysyl-[protein] + L-leucyl-tRNA(Leu) = N-terminal L-leucyl-L-lysyl-[protein] + tRNA(Leu) + H(+). It carries out the reaction N-terminal L-arginyl-[protein] + L-leucyl-tRNA(Leu) = N-terminal L-leucyl-L-arginyl-[protein] + tRNA(Leu) + H(+). The catalysed reaction is L-phenylalanyl-tRNA(Phe) + an N-terminal L-alpha-aminoacyl-[protein] = an N-terminal L-phenylalanyl-L-alpha-aminoacyl-[protein] + tRNA(Phe). Its function is as follows. Functions in the N-end rule pathway of protein degradation where it conjugates Leu, Phe and, less efficiently, Met from aminoacyl-tRNAs to the N-termini of proteins containing an N-terminal arginine or lysine. This Deinococcus radiodurans (strain ATCC 13939 / DSM 20539 / JCM 16871 / CCUG 27074 / LMG 4051 / NBRC 15346 / NCIMB 9279 / VKM B-1422 / R1) protein is Leucyl/phenylalanyl-tRNA--protein transferase.